Here is a 398-residue protein sequence, read N- to C-terminus: Probable elongation factor 1-gamma (398 aa).

A GST C-terminal domain is found at 66-199 (GTSANAETVQ…SVAQFNQAKF (134 aa)). The disordered stretch occupies residues 210-248 (APKAEKPKKEAKPAAAAAQPEDDEPKEEKSKDPFQDMPK). A compositionally biased stretch (basic and acidic residues) spans 211 to 221 (PKAEKPKKEAK). The EF-1-gamma C-terminal domain maps to 239-398 (SKDPFQDMPK…KKFNQGKIFK (160 aa)).

In terms of assembly, EF-1 is composed of four subunits: alpha, beta, delta, and gamma. In terms of processing, AMPylated by fic-1.

In terms of biological role, probably plays a role in anchoring the complex to other cellular components. This chain is Probable elongation factor 1-gamma, found in Caenorhabditis elegans.